The primary structure comprises 231 residues: Large ribosomal subunit protein uL3 (231 aa).

Gln-151 is subject to N5-methylglutamine.

Belongs to the universal ribosomal protein uL3 family. As to quaternary structure, part of the 50S ribosomal subunit. Forms a cluster with proteins L14 and L19. Methylated by PrmB.

Functionally, one of the primary rRNA binding proteins, it binds directly near the 3'-end of the 23S rRNA, where it nucleates assembly of the 50S subunit. The sequence is that of Large ribosomal subunit protein uL3 from Granulibacter bethesdensis (strain ATCC BAA-1260 / CGDNIH1).